The following is a 219-amino-acid chain: Endonuclease V (219 aa).

Mg(2+) is bound by residues aspartate 41 and aspartate 107.

Belongs to the endonuclease V family. The cofactor is Mg(2+).

It localises to the cytoplasm. The enzyme catalyses Endonucleolytic cleavage at apurinic or apyrimidinic sites to products with a 5'-phosphate.. Functionally, DNA repair enzyme involved in the repair of deaminated bases. Selectively cleaves double-stranded DNA at the second phosphodiester bond 3' to a deoxyinosine leaving behind the intact lesion on the nicked DNA. In Desulfurococcus amylolyticus (strain DSM 18924 / JCM 16383 / VKM B-2413 / 1221n) (Desulfurococcus kamchatkensis), this protein is Endonuclease V.